Here is a 442-residue protein sequence, read N- to C-terminus: 3-dehydroquinate synthase, chloroplastic (442 aa).

The N-terminal 58 residues, 1–58 (MAANTISLSNVAASKNLNSFQSRAFIAPPTIFFPVASAKSKPGELSLSSTTLSRSRVR), are a transit peptide targeting the chloroplast. Alanine 59 bears the N-acetylalanine mark. NAD(+) is bound by residues asparagine 119, 150–152 (DGE), lysine 155, 183–188 (GGVIGD), 208–209 (TT), lysine 221, lysine 230, and 248–251 (TLNT). Glutamate 263 is a binding site for a divalent metal cation. Lysine 305 lines the NAD(+) pocket. Histidine 326 and histidine 343 together coordinate a divalent metal cation.

Belongs to the sugar phosphate cyclases superfamily. Dehydroquinate synthase family. In terms of assembly, homodimer. A divalent metal cation is required as a cofactor. It depends on NAD(+) as a cofactor.

The protein localises to the plastid. It localises to the chloroplast. It carries out the reaction 7-phospho-2-dehydro-3-deoxy-D-arabino-heptonate = 3-dehydroquinate + phosphate. It participates in metabolic intermediate biosynthesis; chorismate biosynthesis; chorismate from D-erythrose 4-phosphate and phosphoenolpyruvate: step 2/7. Its function is as follows. Catalyzes the second step in the shikimate pathway. The polypeptide is 3-dehydroquinate synthase, chloroplastic (DHQS) (Arabidopsis thaliana (Mouse-ear cress)).